Here is a 382-residue protein sequence, read N- to C-terminus: Gap junction alpha-1 protein (382 aa).

At 2–23 (GDWSALGKLLDKVQAYSTAGGK) the chain is on the cytoplasmic side. At Ser-5 the chain carries Phosphoserine. The chain crosses the membrane as a helical span at residues 24–44 (VWLSVLFIFRILLLGTAVESA). Residues 45–76 (WGDEQSAFRCNTQQPGCENVCYDKSFPISHVR) are Extracellular-facing. Cystine bridges form between Cys-54–Cys-192 and Cys-187–Cys-198. Residues 77-97 (FWVLQIIFVSVPTLLYLAHVF) form a helical membrane-spanning segment. At 98-155 (YVMRKEEKLNKKEEELKVAQTDGVNVEMHLKQIEIKKFKYGIEEHGKVKMRGGLLRTY) the chain is on the cytoplasmic side. Residue Lys-144 forms a Glycyl lysine isopeptide (Lys-Gly) (interchain with G-Cter in SUMO) linkage. A helical membrane pass occupies residues 156–176 (IISILFKSVFEVAFLLIQWYI). The Extracellular portion of the chain corresponds to 177–207 (YGFSLSAVYTCKRDPCPHQVDCFLSRPTEKT). A helical transmembrane segment spans residues 208 to 228 (IFIIFMLVVSLVSLALNIIEL). Topologically, residues 229 to 382 (FYVFFKGVKD…SRPRPDDLEI (154 aa)) are cytoplasmic. Residue Lys-237 forms a Glycyl lysine isopeptide (Lys-Gly) (interchain with G-Cter in SUMO) linkage. Residues 244-382 (SDPYHATTGP…SRPRPDDLEI (139 aa)) are interaction with NOV. Tyr-247 carries the phosphotyrosine modification. A phosphoserine mark is found at Ser-255, Ser-257, and Ser-262. The interval 264-382 (KYAYFNGCSS…SRPRPDDLEI (119 aa)) is interaction with UBQLN4. Cys-271 carries the S-nitrosocysteine modification. At Thr-275 the chain carries Phosphothreonine. A phosphoserine mark is found at Ser-306 and Ser-314. A compositionally biased stretch (polar residues) spans 317 to 332 (QNRMGQAGSTISNSHA). The interval 317-382 (QNRMGQAGST…SRPRPDDLEI (66 aa)) is disordered. Ser-325 is subject to Phosphoserine; by CK1. Thr-326 bears the Phosphothreonine mark. 2 positions are modified to phosphoserine; by CK1: Ser-328 and Ser-330. Residues Ser-344 and Ser-365 each carry the phosphoserine modification. Low complexity predominate over residues 362 to 374 (RPSSRASSRASSR). The residue at position 368 (Ser-368) is a Phosphoserine; by PKC/PRKCG and PKC/PRKCD. Phosphoserine occurs at positions 369 and 373.

Belongs to the connexin family. Alpha-type (group II) subfamily. A connexon is composed of a hexamer of connexins. Interacts with SGSM3. Interacts with RIC1/CIP150. Interacts with CNST and CSNK1D. Interacts (via C-terminus) with TJP1. Interacts (via C-terminus) with SRC (via SH3 domain). Interacts (not ubiquitinated) with UBQLN4 (via UBA domain). Interacts with NOV. Interacts with TMEM65. Interacts with ANK3/ANKG and PKP2. Phosphorylation at Ser-325, Ser-328 and Ser-330 by CK1 modulates gap junction assembly. Phosphorylated at Ser-368 by PRKCG; phosphorylation induces disassembly of gap junction plaques and inhibition of gap junction activity. Phosphorylation at Ser-368 by PRKCD triggers its internalization into small vesicles leading to proteasome-mediated degradation. In terms of processing, sumoylated with SUMO1, SUMO2 and SUMO3, which may regulate the level of functional Cx43 gap junctions at the plasma membrane. May be desumoylated by SENP1 or SENP2. Post-translationally, S-nitrosylation at Cys-271 is enriched at the muscle endothelial gap junction in arteries, it augments channel permeability and may regulate of smooth muscle cell to endothelial cell communication. Acetylated in the developing cortex; leading to delocalization from the cell membrane.

It is found in the cell membrane. The protein resides in the cell junction. The protein localises to the gap junction. Its subcellular location is the endoplasmic reticulum. Its function is as follows. Gap junction protein that acts as a regulator of bladder capacity. A gap junction consists of a cluster of closely packed pairs of transmembrane channels, the connexons, through which materials of low MW diffuse from one cell to a neighboring cell. May play a critical role in the physiology of hearing by participating in the recycling of potassium to the cochlear endolymph. Negative regulator of bladder functional capacity: acts by enhancing intercellular electrical and chemical transmission, thus sensitizing bladder muscles to cholinergic neural stimuli and causing them to contract. May play a role in cell growth inhibition through the regulation of NOV expression and localization. Plays an essential role in gap junction communication in the ventricles. The chain is Gap junction alpha-1 protein (GJA1) from Ursus americanus (American black bear).